We begin with the raw amino-acid sequence, 126 residues long: Fluoride-specific ion channel FluC 2 (126 aa).

The next 4 membrane-spanning stretches (helical) occupy residues 7–27, 37–57, 65–85, and 101–121; these read MWVG…GLSI, LGTF…SILF, YGDL…TTFS, and AIAA…AAFG. Na(+) is bound by residues G79 and T82.

This sequence belongs to the fluoride channel Fluc/FEX (TC 1.A.43) family.

The protein localises to the cell inner membrane. It carries out the reaction fluoride(in) = fluoride(out). With respect to regulation, na(+) is not transported, but it plays an essential structural role and its presence is essential for fluoride channel function. Its function is as follows. Fluoride-specific ion channel. Important for reducing fluoride concentration in the cell, thus reducing its toxicity. In Yersinia pseudotuberculosis serotype I (strain IP32953), this protein is Fluoride-specific ion channel FluC 2.